A 304-amino-acid polypeptide reads, in one-letter code: Glycine--tRNA ligase alpha subunit (304 aa).

It belongs to the class-II aminoacyl-tRNA synthetase family. Tetramer of two alpha and two beta subunits.

It localises to the cytoplasm. It catalyses the reaction tRNA(Gly) + glycine + ATP = glycyl-tRNA(Gly) + AMP + diphosphate. This chain is Glycine--tRNA ligase alpha subunit, found in Serratia proteamaculans (strain 568).